The primary structure comprises 369 residues: N-succinylamino acid racemase (369 aa).

The Proton donor role is filled by lysine 163. Positions 188, 213, and 238 each coordinate Mg(2+). The Proton acceptor role is filled by lysine 262.

This sequence belongs to the mandelate racemase/muconate lactonizing enzyme family. MenC type 2 subfamily. Homooctamer. Tetramer of dimers. It depends on a divalent metal cation as a cofactor.

It catalyses the reaction (1R,6R)-6-hydroxy-2-succinyl-cyclohexa-2,4-diene-1-carboxylate = 2-succinylbenzoate + H2O. Functionally, acts as a N-succinylamino acid racemase (NSAR) that catalyzes the racemization of N-succinyl-L-phenylglycine. Also converts 2-succinyl-6-hydroxy-2,4-cyclohexadiene-1-carboxylate (SHCHC) to 2-succinylbenzoate (OSB). Catalyzes both N-succinylamino acid racemization and OSB synthesis at equivalent rates. However, NSAR activity is probably the protein's biological function, because menaquinone biosynthesis genes are missing in this species. This chain is N-succinylamino acid racemase, found in Thermus thermophilus (strain ATCC 27634 / DSM 579 / HB8).